Consider the following 221-residue polypeptide: Orotate phosphoribosyltransferase (221 aa).

A 5-phospho-alpha-D-ribose 1-diphosphate-binding site is contributed by lysine 27. Residue 35–36 (FF) participates in orotate binding. Residues 75–76 (YK), arginine 102, lysine 103, lysine 106, histidine 108, and 128–136 (DDVLTAGTA) contribute to the 5-phospho-alpha-D-ribose 1-diphosphate site. Threonine 132 and arginine 160 together coordinate orotate.

It belongs to the purine/pyrimidine phosphoribosyltransferase family. PyrE subfamily. Homodimer. Requires Mg(2+) as cofactor.

It catalyses the reaction orotidine 5'-phosphate + diphosphate = orotate + 5-phospho-alpha-D-ribose 1-diphosphate. It participates in pyrimidine metabolism; UMP biosynthesis via de novo pathway; UMP from orotate: step 1/2. Functionally, catalyzes the transfer of a ribosyl phosphate group from 5-phosphoribose 1-diphosphate to orotate, leading to the formation of orotidine monophosphate (OMP). The polypeptide is Orotate phosphoribosyltransferase (Dichelobacter nodosus (strain VCS1703A)).